The following is a 429-amino-acid chain: Queuine tRNA-ribosyltransferase accessory subunit 2 (429 aa).

Zn(2+) is bound by residues Cys330, Cys332, Cys335, and His361.

Belongs to the queuine tRNA-ribosyltransferase family. QTRT2 subfamily. Heterodimer of a catalytic subunit and an accessory subunit. Zn(2+) serves as cofactor.

It localises to the cytoplasm. Functionally, non-catalytic subunit of the queuine tRNA-ribosyltransferase (TGT) that catalyzes the base-exchange of a guanine (G) residue with queuine (Q) at position 34 (anticodon wobble position) in tRNAs with GU(N) anticodons (tRNA-Asp, -Asn, -His and -Tyr), resulting in the hypermodified nucleoside queuosine (7-(((4,5-cis-dihydroxy-2-cyclopenten-1-yl)amino)methyl)-7-deazaguanosine). This chain is Queuine tRNA-ribosyltransferase accessory subunit 2, found in Culex quinquefasciatus (Southern house mosquito).